The sequence spans 122 residues: Large ribosomal subunit protein uL14 (122 aa).

The protein belongs to the universal ribosomal protein uL14 family. Part of the 50S ribosomal subunit. Forms a cluster with proteins L3 and L19. In the 70S ribosome, L14 and L19 interact and together make contacts with the 16S rRNA in bridges B5 and B8.

In terms of biological role, binds to 23S rRNA. Forms part of two intersubunit bridges in the 70S ribosome. The protein is Large ribosomal subunit protein uL14 of Amoebophilus asiaticus (strain 5a2).